Consider the following 330-residue polypeptide: MGKGILSLQQEMPLEYIGKSYQEVLKIRQESYWKRMRSFSLFEVIMHWTASLNQHTCRSYRGSFLALEKIGLLSLDMNLQEFSLLNHNLILDAIKKIPSSKASWTEGTKQVRAASYISLTRFLNRMTQGIVSIAQPSKQENSRTFFKTREIVKTNAMNRLQTASFLKELKKINPRDWLIAQTMLQGGKRSSEVLSLEIDQICFQQATISFSQLKNRQTEKRIIITYPQKFMHALREYIGPRRGLVFVTSSGKMVGLRQIARTFSQAGLQASIPFKITPHVLRATAVTEYKRLGCSDSDIMKVTGHTTAKMVFAYDKSSREDNASKKMALI.

In terms of domain architecture, Core-binding (CB) spans 39–124; sequence FSLFEVIMHW…SYISLTRFLN (86 aa). In terms of domain architecture, Tyr recombinase spans 152-327; the sequence is VKTNAMNRLQ…SREDNASKKM (176 aa). Active-site residues include Arg-189, Lys-214, His-279, Arg-282, and His-305. The active-site O-(3'-phospho-DNA)-tyrosine intermediate is the Tyr-314.

Belongs to the 'phage' integrase family.

This chain is Virulence plasmid integrase pGP8-D, found in Chlamydia muridarum (strain MoPn / Nigg).